A 394-amino-acid chain; its full sequence is Protein TsgA homolog (394 aa).

12 consecutive transmembrane segments (helical) span residues 11–31, 51–71, 76–96, 101–121, 134–154, 162–182, 206–226, 246–266, 274–294, 302–322, 334–354, and 363–383; these read WISYLSYALTGALVIVTGIVM, FLNAGILISIFLNAWLMEIIP, LVFGFILMLIAIAGLMVGHNL, ISMFIFGVVSGITMSIGTFLV, LLFTDSFFSMAGMIFPIAAAM, WYWVYACIGLLYVGIFVLTLC, VGVLFLAIAALCYILGQLGFI, QLVSNFWISYMIGMWIFSFIL, IVTVLAAMATLAMYLFVSTDN, ILALGFVSSAIYTTLITLGSL, FILTCGTVGTMLTFVVTGPIV, and LATANGLYLAVFILCLALGFF.

Belongs to the major facilitator superfamily. TsgA family.

It localises to the cell inner membrane. In Yersinia pseudotuberculosis serotype O:1b (strain IP 31758), this protein is Protein TsgA homolog.